The following is a 119-amino-acid chain: Holo-[acyl-carrier-protein] synthase (119 aa).

2 residues coordinate Mg(2+): D8 and E58.

This sequence belongs to the P-Pant transferase superfamily. AcpS family. Mg(2+) is required as a cofactor.

The protein resides in the cytoplasm. It carries out the reaction apo-[ACP] + CoA = holo-[ACP] + adenosine 3',5'-bisphosphate + H(+). In terms of biological role, transfers the 4'-phosphopantetheine moiety from coenzyme A to a Ser of acyl-carrier-protein. The protein is Holo-[acyl-carrier-protein] synthase of Bacillus cereus (strain ATCC 10987 / NRS 248).